A 194-amino-acid chain; its full sequence is ATP synthase subunit delta (194 aa).

The protein belongs to the ATPase delta chain family. F-type ATPases have 2 components, F(1) - the catalytic core - and F(0) - the membrane proton channel. F(1) has five subunits: alpha(3), beta(3), gamma(1), delta(1), epsilon(1). F(0) has three main subunits: a(1), b(2) and c(10-14). The alpha and beta chains form an alternating ring which encloses part of the gamma chain. F(1) is attached to F(0) by a central stalk formed by the gamma and epsilon chains, while a peripheral stalk is formed by the delta and b chains.

It is found in the cell inner membrane. In terms of biological role, f(1)F(0) ATP synthase produces ATP from ADP in the presence of a proton or sodium gradient. F-type ATPases consist of two structural domains, F(1) containing the extramembraneous catalytic core and F(0) containing the membrane proton channel, linked together by a central stalk and a peripheral stalk. During catalysis, ATP synthesis in the catalytic domain of F(1) is coupled via a rotary mechanism of the central stalk subunits to proton translocation. Functionally, this protein is part of the stalk that links CF(0) to CF(1). It either transmits conformational changes from CF(0) to CF(1) or is implicated in proton conduction. The sequence is that of ATP synthase subunit delta from Bartonella quintana (strain Toulouse) (Rochalimaea quintana).